The primary structure comprises 183 residues: ER membrane protein complex subunit 4 (183 aa).

Threonine 2 carries the N-acetylthreonine modification. The Cytoplasmic segment spans residues 2 to 66; sequence TAQGGLVANR…VQETDRILVE (65 aa). The disordered stretch occupies residues 20–39; that stretch reads ELSGPGGGSRGRSDRGSGQG. Serine 36 carries the phosphoserine modification. The helical transmembrane segment at 67–87 threads the bilayer; the sequence is KRCWDIALGPLKQIPMNLFIM. The Lumenal portion of the chain corresponds to 88-98; that stretch reads YMAGNTISIFP. The helical transmembrane segment at 99-120 threads the bilayer; the sequence is TMMVCMMAWRPIQALMAISATF. The Cytoplasmic portion of the chain corresponds to 121-127; sequence KMLESSS. A helical transmembrane segment spans residues 128–148; the sequence is QKFLQGLVYLIGNLMGLALAV. At 149 to 183 the chain is on the lumenal side; the sequence is YKCQSMGLLPTHASDWLAFIEPPERMEFSGGGLLL.

This sequence belongs to the EMC4 family. In terms of assembly, component of the ER membrane protein complex (EMC). In terms of tissue distribution, isoform 1 is expressed in brain and heart. Isoform 2 is expressed in heart.

The protein localises to the endoplasmic reticulum membrane. Functionally, part of the endoplasmic reticulum membrane protein complex (EMC) that enables the energy-independent insertion into endoplasmic reticulum membranes of newly synthesized membrane proteins. Preferentially accommodates proteins with transmembrane domains that are weakly hydrophobic or contain destabilizing features such as charged and aromatic residues. Involved in the cotranslational insertion of multi-pass membrane proteins in which stop-transfer membrane-anchor sequences become ER membrane spanning helices. It is also required for the post-translational insertion of tail-anchored/TA proteins in endoplasmic reticulum membranes. By mediating the proper cotranslational insertion of N-terminal transmembrane domains in an N-exo topology, with translocated N-terminus in the lumen of the ER, controls the topology of multi-pass membrane proteins like the G protein-coupled receptors. By regulating the insertion of various proteins in membranes, it is indirectly involved in many cellular processes. The chain is ER membrane protein complex subunit 4 (EMC4) from Homo sapiens (Human).